The primary structure comprises 647 residues: Exoribonuclease 2 (647 aa).

Residues 191-517 (REDLCALPFV…VNHRLLKALI (327 aa)) enclose the RNB domain. Residues 563–645 (PTPFNAEIID…DTRSLIARPF (83 aa)) form the S1 motif domain.

Belongs to the RNR ribonuclease family. RNase II subfamily.

It localises to the cytoplasm. It carries out the reaction Exonucleolytic cleavage in the 3'- to 5'-direction to yield nucleoside 5'-phosphates.. Functionally, involved in mRNA degradation. Hydrolyzes single-stranded polyribonucleotides processively in the 3' to 5' direction. The chain is Exoribonuclease 2 from Edwardsiella piscicida.